A 944-amino-acid polypeptide reads, in one-letter code: Probable UDP-N-acetylglucosamine--peptide N-acetylglucosaminyltransferase SPINDLY (944 aa).

11 TPR repeats span residues 34–67, 68–101, 102–135, 143–176, 177–210, 211–244, 252–285, 286–319, 320–353, 355–387, and 388–421; these read GTDALRYANILRSRNKFADALQLYTTVLDKDGAN, VEALIGKGICLQAQSLPRQALDCFTEAVKVDPKN, ACALTHCGMIYKDEGHLVEAAEAYQKARSADPSY, AIVLTDLGTSLKLAGNTEDGIQKYCEALEVDSHY, APAYYNLGVVYSEMMQFDVALTCYEKAALERPLY, AEAYCNMGVIYKNRGELDAAIACYDRCLTISPNF, AIALTDLGTKVKIEGDINQGVAYYKKALFYNWHY, ADAMYNLGVAYGEMLNFEMAIVFYELALHFNPRC, AEACNNLGVIYKDRDNLDKAVECYQMALSIKPNF, QSLNNLGVVYTVQGKMDAAASMIEKAILANPTY, and AEAYNNLGVLYRDAGSITLSVQAYERCLQIDPDS. The segment at 422-944 is catalytic region; the sequence is RNAGQNRLLA…RCEANGHSSR (523 aa). A disordered region spans residues 873 to 944; the sequence is NATAEEDNQS…RCEANGHSSR (72 aa). A compositionally biased stretch (polar residues) spans 897–911; the sequence is PQPQIMVNGVTSPEG.

Belongs to the glycosyltransferase 41 family. O-GlcNAc transferase subfamily. As to expression, expressed in all parts of plants, including immature leaf blade, leaf sheath, mature leaf blade, roots, germinating embryos and aleurone layers.

The protein localises to the nucleus. The catalysed reaction is L-seryl-[protein] + UDP-N-acetyl-alpha-D-glucosamine = 3-O-(N-acetyl-beta-D-glucosaminyl)-L-seryl-[protein] + UDP + H(+). It carries out the reaction L-threonyl-[protein] + UDP-N-acetyl-alpha-D-glucosamine = 3-O-(N-acetyl-beta-D-glucosaminyl)-L-threonyl-[protein] + UDP + H(+). The protein operates within protein modification; protein glycosylation. Its function is as follows. Probable O-linked N-acetylglucosamine transferase (OGT) involved in various processes such as gibberellin (GA) signaling pathway. OGTs catalyze the addition of nucleotide-activated sugars directly onto the polypeptide through O-glycosidic linkage with the hydroxyl of serine or threonine. Probably acts by adding O-linked sugars to yet unknown proteins. This chain is Probable UDP-N-acetylglucosamine--peptide N-acetylglucosaminyltransferase SPINDLY (SPY), found in Hordeum vulgare (Barley).